The chain runs to 541 residues: MKSYTPYFMLLWSAVGIARAAKIIIVPPIMFESHLYIFKTLASALHERGHHTVFLLSEGRDIDPSNHYSLQRYPGIFNSTTSDAFLQSKMRNIFSGRLTAVELVDILDHYTKNCDMMVGNQALIQGLKKEKFDLLLVDPNDMCGFVIAHLLGVKYAVFSTGLWYPAEVGAPAPLAYVPEFNSLLTDRMNFLERMKNTGVYLISRMGVSFLVLPKYERIMQKYNLLPAKSMYDLVHGSSLWMLCTDVALEFPRPTLPNVVYVGGILTKPASPLPEDLQRWVDGAQEHGFVLVSFGAGVKYLSEDIANKLAGALGRLPQKVIWRFSGTKPKNLGNNTKLIEWLPQNDLLGHSNIRAFLSHGGLNSIFETMYHGVPVVGIPLFGDHYDTMTRVQAKGMGILLEWNTVTEGELYDALVKVINNPSYRQRAQKLSEIHKDQPGHPVNRTTYWIDYILRHDGAHHLRSAVHQISFCQYFLLDIAFVLLLGAVALYFIVSYVTKFIYRKVKSLCSRSTHSTVNGHYQNGILNGRYKGNGHIKHEKKVK.

The first 20 residues, 1–20, serve as a signal peptide directing secretion; sequence MKSYTPYFMLLWSAVGIARA. N-linked (GlcNAc...) asparagine glycosylation is found at Asn-78, Asn-333, and Asn-442. A helical membrane pass occupies residues 472–492; sequence YFLLDIAFVLLLGAVALYFIV.

It belongs to the UDP-glycosyltransferase family. In terms of tissue distribution, brain, restricted to the oligodendrocyte-containing cell layers of cerebrum and cerebellum.

The protein resides in the membrane. It localises to the endoplasmic reticulum. It catalyses the reaction an N-acylsphing-4-enine + UDP-alpha-D-galactose = a beta-D-galactosyl-(1&lt;-&gt;1')-N-acylsphing-4-enine + UDP + H(+). It carries out the reaction N-(2-hydroxy-hexanoyl)-sphing-4-enine + UDP-alpha-D-galactose = N-(2-hydroxy-hexanoyl)-beta-D-galactosyl-sphing-4-enine + UDP + H(+). The enzyme catalyses N-(2-hydroxy-hexanoyl)-sphinganine + UDP-alpha-D-galactose = N-(2-hydroxyhexanoyl)-beta-D-galactosylsphinganine + UDP + H(+). The catalysed reaction is an N-acyl-sphingoid base + UDP-alpha-D-galactose = a D-galactosylceramide + UDP + H(+). The protein operates within sphingolipid metabolism; galactosylceramide biosynthesis. In terms of biological role, catalyzes the transfer of galactose to ceramide, a key enzymatic step in the biosynthesis of galactocerebrosides, which are abundant sphingolipids of the myelin membrane of the central nervous system and peripheral nervous system. Galactosylates both hydroxy- and non-hydroxy fatty acid-containing ceramides and diglycerides. This chain is 2-hydroxyacylsphingosine 1-beta-galactosyltransferase, found in Rattus norvegicus (Rat).